The sequence spans 149 residues: MADQLTEEQIAEFKEAFSLFDKDGDGTITTKELGTVMRSLGQNPTEAELQDMINEVNADGNGTIDFPEFLTMMARKMKDTDSEEEIREAFRVFDKDGNGYISAAELRHVMTNLGEKLTDEEVDEMIREADIDGDGQVNYEEFVQMMTAK.

Residue alanine 2 is modified to N-acetylalanine. 4 EF-hand domains span residues 8–43, 44–79, 81–116, and 117–149; these read EQIAEFKEAFSLFDKDGDGTITTKELGTVMRSLGQN, PTEAELQDMINEVNADGNGTIDFPEFLTMMARKMKD, DSEEEIREAFRVFDKDGNGYISAAELRHVMTNLGEK, and LTDEEVDEMIREADIDGDGQVNYEEFVQMMTAK. 14 residues coordinate Ca(2+): aspartate 21, aspartate 23, aspartate 25, threonine 27, glutamate 32, aspartate 59, asparagine 61, threonine 63, glutamate 68, aspartate 94, aspartate 96, asparagine 98, tyrosine 100, and glutamate 105. Lysine 116 carries the N6,N6,N6-trimethyllysine modification. The Ca(2+) site is built by aspartate 130, aspartate 132, aspartate 134, glutamine 136, and glutamate 141.

The protein belongs to the calmodulin family.

In terms of biological role, calmodulin acts as part of a calcium signal transduction pathway by mediating the control of a large number of enzymes, ion channels, aquaporins and other proteins through calcium-binding. Calcium-binding is required for the activation of calmodulin. Among the enzymes to be stimulated by the calmodulin-calcium complex are a number of protein kinases, such as myosin light-chain kinases and calmodulin-dependent protein kinase type II (CaMK2), and phosphatases. This is Calmodulin from Myxine glutinosa (Atlantic hagfish).